Consider the following 91-residue polypeptide: Protein RacC (91 aa).

This Escherichia coli (strain K12) protein is Protein RacC (racC).